A 365-amino-acid polypeptide reads, in one-letter code: UDP-N-acetylglucosamine--N-acetylmuramyl-(pentapeptide) pyrophosphoryl-undecaprenol N-acetylglucosamine transferase (365 aa).

UDP-N-acetyl-alpha-D-glucosamine contacts are provided by residues threonine 13–glycine 15, asparagine 125, arginine 165, serine 192, and glutamine 293.

The protein belongs to the glycosyltransferase 28 family. MurG subfamily.

Its subcellular location is the cell inner membrane. It carries out the reaction di-trans,octa-cis-undecaprenyl diphospho-N-acetyl-alpha-D-muramoyl-L-alanyl-D-glutamyl-meso-2,6-diaminopimeloyl-D-alanyl-D-alanine + UDP-N-acetyl-alpha-D-glucosamine = di-trans,octa-cis-undecaprenyl diphospho-[N-acetyl-alpha-D-glucosaminyl-(1-&gt;4)]-N-acetyl-alpha-D-muramoyl-L-alanyl-D-glutamyl-meso-2,6-diaminopimeloyl-D-alanyl-D-alanine + UDP + H(+). The protein operates within cell wall biogenesis; peptidoglycan biosynthesis. Cell wall formation. Catalyzes the transfer of a GlcNAc subunit on undecaprenyl-pyrophosphoryl-MurNAc-pentapeptide (lipid intermediate I) to form undecaprenyl-pyrophosphoryl-MurNAc-(pentapeptide)GlcNAc (lipid intermediate II). The chain is UDP-N-acetylglucosamine--N-acetylmuramyl-(pentapeptide) pyrophosphoryl-undecaprenol N-acetylglucosamine transferase from Ruegeria sp. (strain TM1040) (Silicibacter sp.).